The following is a 576-amino-acid chain: Calmodulin-binding protein 60 B (576 aa).

The segment at 1-25 (MMLPTKRPAPDHGDDERNEVMVPEP) is disordered. Residues 1-80 (MMLPTKRPAP…HPSSRPSLNR (80 aa)) form a calmodulin-binding region. Residues 8 to 25 (PAPDHGDDERNEVMVPEP) are compositionally biased toward basic and acidic residues. Positions 150 to 273 (DERQDWTENE…AFHKRLAYKN (124 aa)) are DNA-binding.

It belongs to the plant ACBP60 protein family. (Microbial infection) Interacts with V.dahliae SCP41. In terms of assembly, interacts with calmodulin (CaM).

Its subcellular location is the nucleus. Its function is as follows. Transcription activator that binds DNA in a sequence-specific manner, likely 5'-GAAATTTTGG-3', to promote the expression of target genes. Required for pathogen resistance. This Gossypium hirsutum (Upland cotton) protein is Calmodulin-binding protein 60 B.